The chain runs to 354 residues: GTPase Obg (354 aa).

Positions 1–159 (MQFIDHAEIE…KQLRLELKLL (159 aa)) constitute an Obg domain. The 169-residue stretch at 160 to 328 (AEVGIIGLPN…LLQEIWDVLD (169 aa)) folds into the OBG-type G domain. GTP contacts are provided by residues 166–173 (GLPNAGKS), 191–195 (FTTLI), 213–216 (DIPG), 280–283 (NKLD), and 309–311 (SAV). S173 and T193 together coordinate Mg(2+).

The protein belongs to the TRAFAC class OBG-HflX-like GTPase superfamily. OBG GTPase family. As to quaternary structure, monomer. Requires Mg(2+) as cofactor.

The protein resides in the cytoplasm. In terms of biological role, an essential GTPase which binds GTP, GDP and possibly (p)ppGpp with moderate affinity, with high nucleotide exchange rates and a fairly low GTP hydrolysis rate. Plays a role in control of the cell cycle, stress response, ribosome biogenesis and in those bacteria that undergo differentiation, in morphogenesis control. In Picosynechococcus sp. (strain ATCC 27264 / PCC 7002 / PR-6) (Agmenellum quadruplicatum), this protein is GTPase Obg.